A 417-amino-acid chain; its full sequence is Sulfate adenylyltransferase (417 aa).

This sequence belongs to the sulfate adenylyltransferase family.

It catalyses the reaction sulfate + ATP + H(+) = adenosine 5'-phosphosulfate + diphosphate. The protein operates within sulfur metabolism; hydrogen sulfide biosynthesis; sulfite from sulfate: step 1/3. The chain is Sulfate adenylyltransferase from Psychrobacter cryohalolentis (strain ATCC BAA-1226 / DSM 17306 / VKM B-2378 / K5).